A 291-amino-acid chain; its full sequence is Transcription initiation factor IIE subunit beta (291 aa).

Met1 carries the post-translational modification N-acetylmethionine. The span at 1–13 (MDPSLLRERELFK) shows a compositional bias: basic and acidic residues. Residues 1-63 (MDPSLLRERE…NSDHSNGSFN (63 aa)) are disordered. Polar residues predominate over residues 50–62 (GSKQNSDHSNGSF). At Ser61 the chain carries Phosphoserine. The segment at residues 66–146 (ALSGSSGYKF…YAFKPKYNVR (81 aa)) is a DNA-binding region (TFIIE beta). Lys74 carries the N6-acetyllysine modification. The tract at residues 243-272 (SSMQESGPKKVAPIQRRKKPASQKKRRFKT) is disordered. Over residues 257–271 (QRRKKPASQKKRRFK) the composition is skewed to basic residues.

Belongs to the TFIIE beta subunit family. Tetramer of two alpha and two beta chains. Interacts with FACT subunit SUPT16H. Interacts with ATF7IP. Interacts with SND1. Part of TBP-based Pol II pre-initiation complex (PIC), in which Pol II core assembles with general transcription factors and other specific initiation factors including GTF2E1, GTF2E2, GTF2F1, GTF2F2, TCEA1, ERCC2, ERCC3, GTF2H2, GTF2H3, GTF2H4, GTF2H5, GTF2A1, GTF2A2, GTF2B and TBP; this large multi-subunit PIC complex mediates DNA unwinding and targets Pol II core to the transcription start site where the first phosphodiester bond forms.

It is found in the nucleus. Its function is as follows. Recruits TFIIH to the initiation complex and stimulates the RNA polymerase II C-terminal domain kinase and DNA-dependent ATPase activities of TFIIH. Both TFIIH and TFIIE are required for promoter clearance by RNA polymerase. The polypeptide is Transcription initiation factor IIE subunit beta (GTF2E2) (Homo sapiens (Human)).